The following is a 488-amino-acid chain: Putative serine carboxypeptidase-like 30 (488 aa).

Positions 1–28 (MDNHTKSFSSLLISLWFTALLILVEMVS) are cleaved as a signal peptide. 3 disulfides stabilise this stretch: Cys99–Cys368, Cys262–Cys275, and Cys299–Cys336. An N-linked (GlcNAc...) asparagine glycan is attached at Asn150. Residue Ser192 is part of the active site. N-linked (GlcNAc...) asparagine glycosylation is present at Asn263. 2 N-linked (GlcNAc...) asparagine glycosylation sites follow: Asn364 and Asn375. Catalysis depends on residues Asp405 and His457.

This sequence belongs to the peptidase S10 family. Expression not detected.

Its subcellular location is the secreted. Its function is as follows. Probable carboxypeptidase. This chain is Putative serine carboxypeptidase-like 30 (SCPL30), found in Arabidopsis thaliana (Mouse-ear cress).